Consider the following 294-residue polypeptide: 4-hydroxybenzoate octaprenyltransferase (294 aa).

A run of 8 helical transmembrane segments spans residues 24-44 (IGIL…ADGF), 47-67 (LHLI…GCVI), 99-119 (LLAA…DPLV), 139-159 (FLAI…PMGF), 164-184 (GEVP…AVAY), 213-233 (VAAV…VGIA), 238-258 (PWFF…YTLI), and 274-294 (NWVG…FPAA).

The protein belongs to the UbiA prenyltransferase family. Mg(2+) is required as a cofactor.

The protein localises to the cell inner membrane. It catalyses the reaction all-trans-octaprenyl diphosphate + 4-hydroxybenzoate = 4-hydroxy-3-(all-trans-octaprenyl)benzoate + diphosphate. Its pathway is cofactor biosynthesis; ubiquinone biosynthesis. Functionally, catalyzes the prenylation of para-hydroxybenzoate (PHB) with an all-trans polyprenyl group. Mediates the second step in the final reaction sequence of ubiquinone-8 (UQ-8) biosynthesis, which is the condensation of the polyisoprenoid side chain with PHB, generating the first membrane-bound Q intermediate 3-octaprenyl-4-hydroxybenzoate. The sequence is that of 4-hydroxybenzoate octaprenyltransferase from Aromatoleum aromaticum (strain DSM 19018 / LMG 30748 / EbN1) (Azoarcus sp. (strain EbN1)).